Reading from the N-terminus, the 146-residue chain is Hemoglobin subunit delta (146 aa).

The region spanning 2–146 (HLTGEEKSAV…VATALAHKYH (145 aa)) is the Globin domain. A Phosphoserine modification is found at serine 50. Residues histidine 63 and histidine 92 each coordinate heme b.

Belongs to the globin family. Heterotetramer of two delta chains and two alpha chains. In terms of tissue distribution, red blood cells.

The polypeptide is Hemoglobin subunit delta (HBD) (Leontocebus nigricollis (Black-mantled tamarin)).